We begin with the raw amino-acid sequence, 215 residues long: Pyridoxine/pyridoxamine 5'-phosphate oxidase (215 aa).

Residues 9–12 (RRDY) and lysine 69 contribute to the substrate site. Residues 64–69 (RILLLK), 79–80 (FT), lysine 86, and glutamine 108 each bind FMN. Positions 126, 130, and 134 each coordinate substrate. Residues 143-144 (QS) and tryptophan 188 contribute to the FMN site. Substrate is bound at residue 194-196 (RLH). Arginine 198 contributes to the FMN binding site.

The protein belongs to the pyridoxamine 5'-phosphate oxidase family. Homodimer. The cofactor is FMN.

It catalyses the reaction pyridoxamine 5'-phosphate + O2 + H2O = pyridoxal 5'-phosphate + H2O2 + NH4(+). The enzyme catalyses pyridoxine 5'-phosphate + O2 = pyridoxal 5'-phosphate + H2O2. Its pathway is cofactor metabolism; pyridoxal 5'-phosphate salvage; pyridoxal 5'-phosphate from pyridoxamine 5'-phosphate: step 1/1. It functions in the pathway cofactor metabolism; pyridoxal 5'-phosphate salvage; pyridoxal 5'-phosphate from pyridoxine 5'-phosphate: step 1/1. In terms of biological role, catalyzes the oxidation of either pyridoxine 5'-phosphate (PNP) or pyridoxamine 5'-phosphate (PMP) into pyridoxal 5'-phosphate (PLP). This chain is Pyridoxine/pyridoxamine 5'-phosphate oxidase, found in Pseudomonas fluorescens (strain ATCC BAA-477 / NRRL B-23932 / Pf-5).